The primary structure comprises 201 residues: L-rhamnose-binding lectin SML (201 aa).

8 cysteine pairs are disulfide-bonded: Cys10–Cys40, Cys20–Cys99, Cys54–Cys86, Cys67–Cys73, Cys108–Cys138, Cys117–Cys195, Cys152–Cys182, and Cys163–Cys169. 2 consecutive SUEL-type lectin domains span residues 18 to 100 (LSCD…YNCF) and 107 to 196 (TCEH…YVCQ). A glycan (N-linked (GlcNAc...) asparagine) is linked at Asn168.

Homodimer; non-covalently linked.

In terms of biological role, rhamnose-binding lectin. Also binds melibiose, raffinose, D-galactose, L-arabinose, D-fucose, maltose and D-glucose with decreasing affinity. Does not bind D-arabinose, L-fucose, lactose, xylose or 2-deoxy-D-galactose. Shows strong hemagglutinating activity against rabbit erythrocytes. The chain is L-rhamnose-binding lectin SML from Scomberomorus niphonius (Japanese Spanish mackerel).